The sequence spans 374 residues: Flap endonuclease 1 (374 aa).

The interval 1–105 is N-domain; it reads MGIKGLTALI…ELLQKRFGRR (105 aa). Aspartate 34 is a binding site for Mg(2+). DNA-binding residues include arginine 47 and arginine 71. Aspartate 87 is a binding site for Mg(2+). Residues 103 to 122 form a disordered region; that stretch reads GRREEAREQEEEQKDVADAE. The I-domain stretch occupies residues 123 to 254; it reads KMDQLARRQV…KTALKLIREH (132 aa). 4 residues coordinate Mg(2+): glutamate 159, glutamate 161, aspartate 180, and aspartate 182. Glutamate 159 provides a ligand contact to DNA. DNA-binding residues include glycine 232 and aspartate 234. Aspartate 234 is a binding site for Mg(2+). The tract at residues 335–374 is disordered; sequence SLSQKQQGRLDGFFTVKPGSAPPKRKAEDDKKNVKKKGKK. Residues 340-348 form an interaction with PCNA region; the sequence is QQGRLDGFF.

This sequence belongs to the XPG/RAD2 endonuclease family. FEN1 subfamily. Interacts with PCNA. Three molecules of FEN1 bind to one PCNA trimer with each molecule binding to one PCNA monomer. PCNA stimulates the nuclease activity without altering cleavage specificity. Mg(2+) is required as a cofactor. In terms of processing, phosphorylated. Phosphorylation upon DNA damage induces relocalization to the nuclear plasma.

It localises to the nucleus. It is found in the nucleolus. The protein resides in the nucleoplasm. Its subcellular location is the mitochondrion. Structure-specific nuclease with 5'-flap endonuclease and 5'-3' exonuclease activities involved in DNA replication and repair. During DNA replication, cleaves the 5'-overhanging flap structure that is generated by displacement synthesis when DNA polymerase encounters the 5'-end of a downstream Okazaki fragment. It enters the flap from the 5'-end and then tracks to cleave the flap base, leaving a nick for ligation. Also involved in the long patch base excision repair (LP-BER) pathway, by cleaving within the apurinic/apyrimidinic (AP) site-terminated flap. Acts as a genome stabilization factor that prevents flaps from equilibrating into structures that lead to duplications and deletions. Also possesses 5'-3' exonuclease activity on nicked or gapped double-stranded DNA, and exhibits RNase H activity. Also involved in replication and repair of rDNA and in repairing mitochondrial DNA. The polypeptide is Flap endonuclease 1 (Mycosarcoma maydis (Corn smut fungus)).